We begin with the raw amino-acid sequence, 160 residues long: MSLATLDTSQHPNLPSASATLFKAKAAKKFSFEQIAQHIGRNEVATAAIFYGQAKASPEDITNLASLLGIPQEVLEDQLNGFPDRGKSVEMPPKEPLIYRLYEIVQNYGYAYKAVLNEKFGDGIMSAISFSTKVEKETDADGNNWAVITLRGKWLPFSRF.

Active-site residues include arginine 100, glutamate 103, and serine 126.

This sequence belongs to the cyanase family.

It carries out the reaction cyanate + hydrogencarbonate + 3 H(+) = NH4(+) + 2 CO2. In terms of biological role, catalyzes the reaction of cyanate with bicarbonate to produce ammonia and carbon dioxide. The chain is Cyanate hydratase from Aspergillus oryzae (strain ATCC 42149 / RIB 40) (Yellow koji mold).